The primary structure comprises 127 residues: Glycine cleavage system H protein (127 aa).

The 83-residue stretch at asparagine 22–lysine 104 folds into the Lipoyl-binding domain. Lysine 63 bears the N6-lipoyllysine mark.

This sequence belongs to the GcvH family. The glycine cleavage system is composed of four proteins: P, T, L and H. The cofactor is (R)-lipoate.

Its function is as follows. The glycine cleavage system catalyzes the degradation of glycine. The H protein shuttles the methylamine group of glycine from the P protein to the T protein. In terms of biological role, is also involved in protein lipoylation via its role as an octanoyl/lipoyl carrier protein intermediate. The chain is Glycine cleavage system H protein from Geobacillus kaustophilus (strain HTA426).